Consider the following 542-residue polypeptide: Importin subunit alpha-1 (542 aa).

Residues 1–29 are disordered; the sequence is MSASSRFIPEHRRQNYKGKGTFQADELRR. The region spanning 1–60 is the IBB domain; the sequence is MSASSRFIPEHRRQNYKGKGTFQADELRRRRETQQIEIRKQKREENLNKRRNLVDVQEPA. ARM repeat units follow at residues 114 to 155, 156 to 197, 198 to 240, 241 to 282, 283 to 324, 325 to 366, 367 to 408, and 409 to 453; these read IQKV…SSNQ, THVV…SPMC, RDHV…KNPQ, PDWN…ANEK, IQAI…DDVQ, TQVI…NSSQ, IQYV…GARR, and PDQI…GELD.

Belongs to the importin alpha family. As to quaternary structure, interacts with pap1.

Its subcellular location is the nucleus. In terms of biological role, binds specifically and directly to substrates containing either a simple or bipartite NLS motif. Promotes docking of import substrates to the nuclear envelope. Seems to act as a cytosolic receptor for both simple and bipartite NLS motifs. Has an essential role in mitotic chromosome condensation. Involved in nuclear protein import. Required for efficient nuclear import of both an SV40 nuclear localization signal-containing reporter protein and the pap1 component of the stress response MAP kinase pathway. Required for proper mitotic progression. The polypeptide is Importin subunit alpha-1 (cut15) (Schizosaccharomyces pombe (strain 972 / ATCC 24843) (Fission yeast)).